We begin with the raw amino-acid sequence, 160 residues long: RNA pyrophosphohydrolase (160 aa).

Positions 10 to 154 constitute a Nudix hydrolase domain; that stretch reads PYRPCVGVML…KRDVYVAVLD (145 aa). Residues 44 to 65 carry the Nudix box motif; the sequence is GGVEKGEDPRAAALRELWEETG.

It belongs to the Nudix hydrolase family. RppH subfamily. The cofactor is a divalent metal cation.

Its function is as follows. Accelerates the degradation of transcripts by removing pyrophosphate from the 5'-end of triphosphorylated RNA, leading to a more labile monophosphorylated state that can stimulate subsequent ribonuclease cleavage. In Roseobacter denitrificans (strain ATCC 33942 / OCh 114) (Erythrobacter sp. (strain OCh 114)), this protein is RNA pyrophosphohydrolase.